The sequence spans 277 residues: Probable endonuclease 4 (277 aa).

Positions 67, 107, 142, 176, 179, 211, 224, 226, and 256 each coordinate Zn(2+).

The protein belongs to the AP endonuclease 2 family. Requires Zn(2+) as cofactor.

The catalysed reaction is Endonucleolytic cleavage to 5'-phosphooligonucleotide end-products.. Its function is as follows. Endonuclease IV plays a role in DNA repair. It cleaves phosphodiester bonds at apurinic or apyrimidinic (AP) sites, generating a 3'-hydroxyl group and a 5'-terminal sugar phosphate. The protein is Probable endonuclease 4 of Clostridium beijerinckii (strain ATCC 51743 / NCIMB 8052) (Clostridium acetobutylicum).